The primary structure comprises 356 residues: Probable arabinogalactan endo-beta-1,4-galactanase A (356 aa).

A signal peptide spans 1 to 21; the sequence is MLGKTVLLPLLVLLCHSLASA. An N-linked (GlcNAc...) asparagine glycan is attached at asparagine 133. Glutamate 157 acts as the Proton donor in catalysis. The Nucleophile role is filled by glutamate 268.

Belongs to the glycosyl hydrolase 53 family.

Its subcellular location is the secreted. The enzyme catalyses The enzyme specifically hydrolyzes (1-&gt;4)-beta-D-galactosidic linkages in type I arabinogalactans.. Its function is as follows. Endogalactanase involved in the degradation of plant cell wall polysaccharides, and more particularly of hairy regions of pectin. In Aspergillus fumigatus (strain ATCC MYA-4609 / CBS 101355 / FGSC A1100 / Af293) (Neosartorya fumigata), this protein is Probable arabinogalactan endo-beta-1,4-galactanase A (galA).